Consider the following 178-residue polypeptide: CD209 antigen-like protein C (178 aa).

The cysteines at positions 48 and 59 are disulfide-linked. Residues 54-169 (VFQGNCYFFS…CTIKKYWICK (116 aa)) enclose the C-type lectin domain. N-linked (GlcNAc...) asparagine glycosylation is present at Asn70. 2 disulfides stabilise this stretch: Cys76–Cys168 and Cys147–Cys160. Positions 138, 140, 145, 156, and 157 each coordinate Ca(2+).

Functionally, probable pathogen-recognition receptor. May recognize in a calcium-dependent manner high mannose N-linked oligosaccharides in a variety of pathogen antigens. This Mus musculus (Mouse) protein is CD209 antigen-like protein C (Cd209c).